The primary structure comprises 478 residues: Pathogenicity cluster 5 protein d (478 aa).

An N-terminal signal peptide occupies residues 1–19; the sequence is MQIQNLIAALAGMAVVAEA. Disordered regions lie at residues 35-89 and 299-400; these read RQNK…GQAN and NGGK…GGKG. Positions 38 to 64 are enriched in low complexity; that stretch reads KGGNNNNNNNNNNNNNNNNNKNNGGNN. Polar residues predominate over residues 65-89; that stretch reads QLCLNPNNVQKGSQQAGTPKQGQAN. The span at 316–326 shows a compositional bias: gly residues; that stretch reads NNDGGGGGNDG. Composition is skewed to low complexity over residues 327–348 and 379–393; these read GNNSANNSGSGNKQGGKQQNGA and TQAGGSASNSATNGN. Asn328 and Asn332 each carry an N-linked (GlcNAc...) asparagine glycan.

It localises to the secreted. In terms of biological role, secreted protein required for appressorial penetration of intact host epidermal cells and for pathogenicit, but not for subsequent biotrophic and necrotrophic colonization of leaves. The polypeptide is Pathogenicity cluster 5 protein d (Colletotrichum graminicola (strain M1.001 / M2 / FGSC 10212) (Maize anthracnose fungus)).